A 408-amino-acid chain; its full sequence is Phosphoglycerate kinase (408 aa).

Substrate-binding positions include 28–30, Arg-43, 66–69, Arg-123, and Arg-163; these read DIN and HQGR. Residues Glu-334 and 358 to 361 each bind ATP; that span reads GGHT.

The protein belongs to the phosphoglycerate kinase family. In terms of assembly, monomer.

The protein localises to the cytoplasm. It carries out the reaction (2R)-3-phosphoglycerate + ATP = (2R)-3-phospho-glyceroyl phosphate + ADP. Its pathway is carbohydrate degradation; glycolysis; pyruvate from D-glyceraldehyde 3-phosphate: step 2/5. The sequence is that of Phosphoglycerate kinase from Pyrobaculum aerophilum (strain ATCC 51768 / DSM 7523 / JCM 9630 / CIP 104966 / NBRC 100827 / IM2).